Reading from the N-terminus, the 518-residue chain is Metalloprotease TIKI2 (518 aa).

The first 22 residues, 1–22, serve as a signal peptide directing secretion; that stretch reads MNCQSGLRWLVTLCAFFQVGSA. Residues 23-499 lie on the Extracellular side of the membrane; the sequence is RDTHESTRQC…SALDSAAPNP (477 aa). N-linked (GlcNAc...) asparagine glycans are attached at residues N224, N233, N282, N325, and N340. Residues 500–517 form a helical membrane-spanning segment; the sequence is TYALTCFLACLISQLLFA. Position 518 (S518) is a topological domain, cytoplasmic.

Belongs to the TIKI family. Mn(2+) is required as a cofactor. The cofactor is Co(2+).

The protein resides in the cell membrane. Its function is as follows. Metalloprotease that acts as a negative regulator of the Wnt signaling pathway by mediating the cleavage of the N-terminal residues of a subset of Wnt proteins. Following cleavage, Wnt proteins become oxidized and form large disulfide-bond oligomers, leading to their inactivation. The sequence is that of Metalloprotease TIKI2 (trabd2b) from Danio rerio (Zebrafish).